Here is a 429-residue protein sequence, read N- to C-terminus: Glutamate-1-semialdehyde 2,1-aminomutase 2 (429 aa).

Lysine 268 bears the N6-(pyridoxal phosphate)lysine mark.

This sequence belongs to the class-III pyridoxal-phosphate-dependent aminotransferase family. HemL subfamily. Homodimer. Pyridoxal 5'-phosphate serves as cofactor.

The protein resides in the cytoplasm. The enzyme catalyses (S)-4-amino-5-oxopentanoate = 5-aminolevulinate. The protein operates within porphyrin-containing compound metabolism; protoporphyrin-IX biosynthesis; 5-aminolevulinate from L-glutamyl-tRNA(Glu): step 2/2. The chain is Glutamate-1-semialdehyde 2,1-aminomutase 2 from Staphylococcus epidermidis (strain ATCC 35984 / DSM 28319 / BCRC 17069 / CCUG 31568 / BM 3577 / RP62A).